The following is a 199-amino-acid chain: Cytosine-containing mismatch-binding protein 1 (199 aa).

The HMG box DNA-binding region spans 123–197 (PKKPSSAFIL…QYDKFMKEAG (75 aa)).

Monomer.

It localises to the nucleus. Its function is as follows. Binds to cytosines in base mismatches and opposite chemically altered guanines. May be involved in repair of DNA damage. This Schizosaccharomyces pombe (strain 972 / ATCC 24843) (Fission yeast) protein is Cytosine-containing mismatch-binding protein 1.